A 134-amino-acid chain; its full sequence is Thionin-2.2 (134 aa).

The signal sequence occupies residues Met-1 to Ala-24. Disulfide bonds link Cys-27–Cys-64, Cys-28–Cys-56, and Cys-40–Cys-50. Residues Asp-71–Ala-134 constitute a propeptide, acidic domain.

The protein belongs to the plant thionin (TC 1.C.44) family. In terms of tissue distribution, low basal expression in seedlings. Also detected in rosette leaves.

It localises to the secreted. Functionally, thionins are small plant proteins which are toxic to animal cells. They seem to exert their toxic effect at the level of the cell membrane. Their precise function is not known. The chain is Thionin-2.2 (THI2.2) from Arabidopsis thaliana (Mouse-ear cress).